We begin with the raw amino-acid sequence, 338 residues long: Glycerol-3-phosphate dehydrogenase [NAD(P)+] (338 aa).

NADPH-binding residues include serine 15, tyrosine 16, histidine 36, and lysine 110. Sn-glycerol 3-phosphate-binding residues include lysine 110, glycine 139, and threonine 141. Alanine 143 lines the NADPH pocket. Lysine 195, aspartate 248, serine 258, arginine 259, and asparagine 260 together coordinate sn-glycerol 3-phosphate. Lysine 195 serves as the catalytic Proton acceptor. NADPH is bound at residue arginine 259. NADPH contacts are provided by valine 283 and glutamate 285.

It belongs to the NAD-dependent glycerol-3-phosphate dehydrogenase family.

Its subcellular location is the cytoplasm. The catalysed reaction is sn-glycerol 3-phosphate + NAD(+) = dihydroxyacetone phosphate + NADH + H(+). It carries out the reaction sn-glycerol 3-phosphate + NADP(+) = dihydroxyacetone phosphate + NADPH + H(+). The protein operates within membrane lipid metabolism; glycerophospholipid metabolism. Its function is as follows. Catalyzes the reduction of the glycolytic intermediate dihydroxyacetone phosphate (DHAP) to sn-glycerol 3-phosphate (G3P), the key precursor for phospholipid synthesis. In Edwardsiella ictaluri (strain 93-146), this protein is Glycerol-3-phosphate dehydrogenase [NAD(P)+].